A 279-amino-acid chain; its full sequence is Protein phosphatase 1 regulatory subunit 3E (279 aa).

A phosphoserine mark is found at serine 16 and serine 33. The disordered stretch occupies residues 28–86 (RSQRPSLEEEPEEEPGEGGTRFGARSRAHAPSRGRRARSAPAGGGGARAPRSRSPDTRK). Positions 51–65 (ARSRAHAPSRGRRAR) are enriched in basic residues. The residue at position 66 (serine 66) is a Phosphoserine. Residues 87–90 (RVRF) carry the PP1-binding motif motif. One can recognise a CBM21 domain in the interval 154 to 259 (AARLLTQRIC…NNGGRDYALR (106 aa)). Residues 176–198 (GSARVVDLAYEKRVSVRWSADGW) form a glycogen-binding motif region. Positions 248 to 256 (WDNNGGRDY) are substrate-binding motif.

As to expression, expressed in skeletal muscle and heart with barely detectable levels in liver.

Its function is as follows. Acts as a glycogen-targeting subunit for PP1. PP1 is involved in glycogen metabolism and contributes to the activation of glycogen synthase leading to an increase in glycogen synthesis. This is Protein phosphatase 1 regulatory subunit 3E (PPP1R3E) from Homo sapiens (Human).